Consider the following 880-residue polypeptide: Guanine nucleotide-binding protein subunit beta 2 (880 aa).

Serine 24 is subject to Phosphoserine. Kelch repeat units lie at residues 291-339, 377-425, and 501-552; these read NIYI…MVNN, HIFF…KIDI, and TVII…LTPS. The interval 624–649 is disordered; the sequence is FNSGSAAQESPKAGASASSASAASFD. Low complexity predominate over residues 638–647; it reads ASASSASAAS. Residues 691-738 form a Kelch 4 repeat; it reads TVVLHGGSNGLNVLDDMWLMDLECETWTPIETFAKADSSEDGDEKLDS.

G proteins are composed of 3 units, alpha, beta and gamma. GPB1 interacts with the alpha subunit GPA2.

It localises to the cytoplasm. The protein resides in the mitochondrion. Functionally, beta subunit of a guanine nucleotide-binding protein (G protein). G proteins are involved as modulators or transducers in various transmembrane signaling systems. The beta and gamma chains are required for the GTPase activity, for replacement of GDP by GTP, and for G protein-effector interaction. Involved in the determination of the cAMP level according to nutritional conditions, most probably as a regulator of cAMP phosphodiesterase. Required for the control of pseudohyphal and haploid invasive growth. The chain is Guanine nucleotide-binding protein subunit beta 2 (GPB2) from Saccharomyces cerevisiae (strain ATCC 204508 / S288c) (Baker's yeast).